We begin with the raw amino-acid sequence, 369 residues long: MPERDPILLTPGPLTTSRMTRDAMLHDWGSWDAAFNRLTKSVCADLVRIAGGGDAYVCVPLQGSGTFAVEAALGTLVPRDGRVLVPNNGAYCARIAKILRRLGIAHSELPFAEDEPASAQAIDAALARDARITHVALVHLETSAGLLNPLDDIAAVCRARGKALIVDAMSSFGALPIALAGSGIDALISASGKCLEGVPGMGFVIARRAPLEAAEGRSPSVVLDLHDQYAYMQRTSQWRFTPPTHVLAALRAALDQFFDEGGQPARGARYAENCAALVDGMRALGFEPFLDARAQASVIVTFHAPADPAYAFAAFYAAVRDAGYVLYPGKLTTADTFRVGCIGALGAHEMRGAVAAIGGALRALGIAMR.

An N6-(pyridoxal phosphate)lysine modification is found at K193.

It belongs to the class-V pyridoxal-phosphate-dependent aminotransferase family. PhnW subfamily. Homodimer. The cofactor is pyridoxal 5'-phosphate.

The enzyme catalyses (2-aminoethyl)phosphonate + pyruvate = phosphonoacetaldehyde + L-alanine. Its function is as follows. Involved in phosphonate degradation. The polypeptide is 2-aminoethylphosphonate--pyruvate transaminase (Burkholderia thailandensis (strain ATCC 700388 / DSM 13276 / CCUG 48851 / CIP 106301 / E264)).